A 428-amino-acid polypeptide reads, in one-letter code: MMTSRSIVPQQSTDDVVVVDGKNVAKGRNRQVLGDIGNVVRGNYPKNNEPEKINHRPRTRSQNPTLLVEDNLKKPVVKRNAVPKPKKVAGKPKVVDVIEISSDSDEELGLVAAREKKATKKKATTYTSVLTARSKAACGLEKKQKEKIVDIDSADVENDLAAVEYVEDIYSFYKSVESEWRPRDYMASQPDINEKMRLILVEWLIDVHVRFELNPETFYLTVNILDRFLSVKPVPRKELQLVGLSALLMSAKYEEIWPPQVEDLVDIADHAYSHKQILVMEKTILSTLEWYLTVPTHYVFLARFIKASIADEKMENMVHYLAELGVMHYDTMIMFSPSMVAASAIYAARSSLRQVPIWTSTLKHHTGYSETQLMDCAKLLAYQQWKQQEEGSESSTKGALRKKYSKDERFAVALIPPAKALLTGTESA.

This sequence belongs to the cyclin family. Cyclin AB subfamily. As to quaternary structure, interacts with FZR2/CCS52A1, FZR1/CCS52A2 and FZR3/CCS52B. In terms of tissue distribution, expressed in root tip, lateral root apex, shoot apex, leaf primordia, axillary buds, stamen and petal primordia, ovules and developing embryo.

Its subcellular location is the nucleus. This Arabidopsis thaliana (Mouse-ear cress) protein is Cyclin-B1-1 (CYCB1-1).